The primary structure comprises 106 residues: Putative cytochrome c oxidase subunit 7A3, mitochondrial (106 aa).

A mitochondrion-targeting transit peptide spans 1–23 (MLWNLLALHQIGQRTISTASHRH).

It belongs to the cytochrome c oxidase VIIa family.

It localises to the mitochondrion inner membrane. In Homo sapiens (Human), this protein is Putative cytochrome c oxidase subunit 7A3, mitochondrial (COX7A2P2).